Here is a 356-residue protein sequence, read N- to C-terminus: Histidinol-phosphate aminotransferase (356 aa).

K214 is subject to N6-(pyridoxal phosphate)lysine.

It belongs to the class-II pyridoxal-phosphate-dependent aminotransferase family. Histidinol-phosphate aminotransferase subfamily. In terms of assembly, homodimer. The cofactor is pyridoxal 5'-phosphate.

It catalyses the reaction L-histidinol phosphate + 2-oxoglutarate = 3-(imidazol-4-yl)-2-oxopropyl phosphate + L-glutamate. The protein operates within amino-acid biosynthesis; L-histidine biosynthesis; L-histidine from 5-phospho-alpha-D-ribose 1-diphosphate: step 7/9. The protein is Histidinol-phosphate aminotransferase of Shigella flexneri serotype 5b (strain 8401).